The chain runs to 196 residues: Small nuclear ribonucleoprotein-associated protein B (196 aa).

In terms of domain architecture, Sm spans 7-101 (AHSSRLANLI…ILSTVVEDKP (95 aa)). The short motif at 105–132 (KKERLVRDKKEKKQAQKQTKLRKEKEKK) is the Nuclear localization signal element. A compositionally biased stretch (basic and acidic residues) spans 108–118 (RLVRDKKEKKQ). Residues 108 to 196 (RLVRDKKEKK…FQPPPGFKRK (89 aa)) are disordered. Polar residues predominate over residues 140-181 (NTANAKHTSSNSREIAQPSSSRYNGGNDNIGANRSRFNNEAP).

This sequence belongs to the snRNP SmB/SmN family. In terms of assembly, component of the Sm core complex, present in spliceosomal snRNP U1, U2, U4/U6 and U5. The core complex contains SMB1, SMD1, SMD2, SMD3, SME1, SMX3 and SMX2 (Sm proteins B, D1, D2, D3, E, F and G, respectively), and is probably a heptameric ring structure. SMB1 specifically interacts with SMD3. Belongs to the CWC complex (or CEF1-associated complex), a spliceosome sub-complex reminiscent of a late-stage spliceosome composed of the U2, U5 and U6 snRNAs and at least BUD13, BUD31, BRR2, CDC40, CEF1, CLF1, CUS1, CWC2, CWC15, CWC21, CWC22, CWC23, CWC24, CWC25, CWC27, ECM2, HSH155, IST3, ISY1, LEA1, MSL1, NTC20, PRP8, PRP9, PRP11, PRP19, PRP21, PRP22, PRP45, PRP46, SLU7, SMB1, SMD1, SMD2, SMD3, SMX2, SMX3, SNT309, SNU114, SPP2, SYF1, SYF2, RSE1 and YJU2. Component of the U4/U6-U5 tri-snRNP complex composed of the U4, U6 and U5 snRNAs and at least PRP3, PRP4, PRP6, PRP8, PRP18, PRP38, SNU13, SNU23, SNU66, SNU114, SPP381, SMB1, SMD1, SMD2, SMD3, SMX2, SMX3, LSM2, LSM3, LSM4, LSM5, LSM6, LSM7, LSM8, BRR2 and DIB1. Interacts with the trimethylguanosine synthase TGS1.

It localises to the nucleus. The protein localises to the cytoplasm. Functionally, plays a role in pre-mRNA splicing as a core component of the spliceosomal U1, U2, U4 and U5 small nuclear ribonucleoproteins (snRNPs), the building blocks of the spliceosome. This is Small nuclear ribonucleoprotein-associated protein B (SMB1) from Saccharomyces cerevisiae (strain ATCC 204508 / S288c) (Baker's yeast).